Consider the following 848-residue polypeptide: Adenylate cyclase (848 aa).

Residues 1–535 (MYLYIETLKQ…DVSHHFPLRL (535 aa)) are catalytic. Residues 541 to 848 (KALYSPCEIR…DTPLLQQYFS (308 aa)) form a regulatory region. His-609 carries the post-translational modification Phosphohistidine; by CRR.

This sequence belongs to the adenylyl cyclase class-1 family.

Its subcellular location is the cytoplasm. It carries out the reaction ATP = 3',5'-cyclic AMP + diphosphate. This is Adenylate cyclase (cyaA) from Escherichia coli O157:H7.